The following is a 1093-amino-acid chain: Protein translocase subunit SecA (1093 aa).

Residues Q84, 102-106 (GEGKT), and D491 contribute to the ATP site. Disordered stretches follow at residues 837–869 (QNLQEQSYKDPASDNLENNPEPKTGSQSQSEHE) and 904–1062 (SELE…TSEA). Basic and acidic residues-rich tracts occupy residues 904-937 (SELESKEKEQEEVKNQETQPKENKPAETKVDATK), 944-971 (EELKAKEVATVVEEKPKKVSKAKSEKLK), and 978-1062 (PKDL…TSEA).

It belongs to the SecA family. In terms of assembly, monomer and homodimer. Part of the essential Sec protein translocation apparatus which comprises SecA, SecYEG and auxiliary proteins SecDF. Other proteins may also be involved.

The protein localises to the cell membrane. It is found in the cytoplasm. The enzyme catalyses ATP + H2O + cellular proteinSide 1 = ADP + phosphate + cellular proteinSide 2.. Its function is as follows. Part of the Sec protein translocase complex. Interacts with the SecYEG preprotein conducting channel. Has a central role in coupling the hydrolysis of ATP to the transfer of proteins into and across the cell membrane, serving as an ATP-driven molecular motor driving the stepwise translocation of polypeptide chains across the membrane. The protein is Protein translocase subunit SecA of Mycoplasmopsis synoviae (strain 53) (Mycoplasma synoviae).